We begin with the raw amino-acid sequence, 792 residues long: Cis-abienol synthase, chloroplastic (792 aa).

A chloroplast-targeting transit peptide spans 1 to 37 (MVLGLRSKIIPLPDHKLGNIKLGSVTNAICHRPCRVR). Mg(2+) contacts are provided by Asp-539, Asp-543, Asn-684, and Glu-692. A DDXXD motif motif is present at residues 539-543 (DDFFD).

This sequence belongs to the terpene synthase family. The cofactor is Mg(2+). As to expression, expressed specifically in trichomes.

It localises to the plastid. Its subcellular location is the chloroplast. It catalyses the reaction 8-hydroxycopalyl diphosphate = cis-abienol + diphosphate. It functions in the pathway secondary metabolite biosynthesis; terpenoid biosynthesis. In terms of biological role, involved in the biosynthesis of cis-abienol, a labdane diterpene that can be used as synthesis precursor of ambergris substitution fragance products. The polypeptide is Cis-abienol synthase, chloroplastic (Nicotiana tabacum (Common tobacco)).